We begin with the raw amino-acid sequence, 246 residues long: Probable 2-phosphosulfolactate phosphatase (246 aa).

It belongs to the ComB family. Requires Mg(2+) as cofactor.

It catalyses the reaction (2R)-O-phospho-3-sulfolactate + H2O = (2R)-3-sulfolactate + phosphate. This chain is Probable 2-phosphosulfolactate phosphatase, found in Synechococcus sp. (strain WH7803).